A 257-amino-acid polypeptide reads, in one-letter code: Membrane protein insertase YidC 1 (257 aa).

Residues 1–20 (MYRKFGMAAMLVSILLLMTG) form the signal peptide. Cys-21 carries the N-palmitoyl cysteine lipid modification. The S-diacylglycerol cysteine moiety is linked to residue Cys-21. A run of 5 helical transmembrane segments spans residues 35 to 55 (IWDSYFVYPLSWLMIYFANAF), 59 to 79 (FGLAIIVVTLLIRLLILPLMI), 129 to 149 (LAGCFPVLIQMPILLAFYHAI), 160 to 180 (FLWFVLNQPDPILLPIIAGIT), and 205 to 225 (VMILVFAMFLPSSLALYWVIG).

Belongs to the OXA1/ALB3/YidC family. Type 2 subfamily.

It is found in the cell membrane. Functionally, required for the insertion and/or proper folding and/or complex formation of integral membrane proteins into the membrane. Involved in integration of membrane proteins that insert both dependently and independently of the Sec translocase complex, as well as at least some lipoproteins. This chain is Membrane protein insertase YidC 1, found in Halalkalibacterium halodurans (strain ATCC BAA-125 / DSM 18197 / FERM 7344 / JCM 9153 / C-125) (Bacillus halodurans).